A 121-amino-acid chain; its full sequence is Small ribosomal subunit protein uS13 (121 aa).

Residues 93–121 form a disordered region; that stretch reads KGLPMRGQRTRTNARTRKGPRRAAQALKK.

It belongs to the universal ribosomal protein uS13 family. In terms of assembly, part of the 30S ribosomal subunit. Forms a loose heterodimer with protein S19. Forms two bridges to the 50S subunit in the 70S ribosome.

Functionally, located at the top of the head of the 30S subunit, it contacts several helices of the 16S rRNA. In the 70S ribosome it contacts the 23S rRNA (bridge B1a) and protein L5 of the 50S subunit (bridge B1b), connecting the 2 subunits; these bridges are implicated in subunit movement. Contacts the tRNAs in the A and P-sites. The polypeptide is Small ribosomal subunit protein uS13 (Burkholderia ambifaria (strain ATCC BAA-244 / DSM 16087 / CCUG 44356 / LMG 19182 / AMMD) (Burkholderia cepacia (strain AMMD))).